Reading from the N-terminus, the 165-residue chain is Small ribosomal subunit protein uS13 (165 aa).

A disordered region spans residues 139–165; it reads GMTIGVARKKAAQPQSQQSSSQQQKSS. Residues 153–165 show a composition bias toward low complexity; it reads QSQQSSSQQQKSS.

Belongs to the universal ribosomal protein uS13 family. In terms of assembly, part of the 30S ribosomal subunit. Forms a loose heterodimer with protein S19. Forms two bridges to the 50S subunit in the 70S ribosome.

Located at the top of the head of the 30S subunit, it contacts several helices of the 16S rRNA. In the 70S ribosome it contacts the 23S rRNA (bridge B1a) and protein L5 of the 50S subunit (bridge B1b), connecting the 2 subunits; these bridges are implicated in subunit movement. In Saccharolobus solfataricus (strain ATCC 35092 / DSM 1617 / JCM 11322 / P2) (Sulfolobus solfataricus), this protein is Small ribosomal subunit protein uS13.